We begin with the raw amino-acid sequence, 329 residues long: Acetyl-coenzyme A carboxylase carboxyl transferase subunit alpha (329 aa).

Positions 40 to 294 (QLETLAARRR…KESLIRNLRE (255 aa)) constitute a CoA carboxyltransferase C-terminal domain.

It belongs to the AccA family. As to quaternary structure, acetyl-CoA carboxylase is a heterohexamer composed of biotin carboxyl carrier protein (AccB), biotin carboxylase (AccC) and two subunits each of ACCase subunit alpha (AccA) and ACCase subunit beta (AccD).

The protein localises to the cytoplasm. It carries out the reaction N(6)-carboxybiotinyl-L-lysyl-[protein] + acetyl-CoA = N(6)-biotinyl-L-lysyl-[protein] + malonyl-CoA. It functions in the pathway lipid metabolism; malonyl-CoA biosynthesis; malonyl-CoA from acetyl-CoA: step 1/1. Its function is as follows. Component of the acetyl coenzyme A carboxylase (ACC) complex. First, biotin carboxylase catalyzes the carboxylation of biotin on its carrier protein (BCCP) and then the CO(2) group is transferred by the carboxyltransferase to acetyl-CoA to form malonyl-CoA. In Prochlorococcus marinus (strain MIT 9211), this protein is Acetyl-coenzyme A carboxylase carboxyl transferase subunit alpha.